A 299-amino-acid polypeptide reads, in one-letter code: Diphthine methyl ester synthase 1 (299 aa).

S-adenosyl-L-methionine-binding positions include Leu9, Asp85, Gly88, 113–114 (SV), Leu164, Leu222, and His247.

It belongs to the diphthine synthase family.

It localises to the cytoplasm. It catalyses the reaction 2-[(3S)-amino-3-carboxypropyl]-L-histidyl-[translation elongation factor 2] + 4 S-adenosyl-L-methionine = diphthine methyl ester-[translation elongation factor 2] + 4 S-adenosyl-L-homocysteine + 3 H(+). Its pathway is protein modification; peptidyl-diphthamide biosynthesis. Functionally, S-adenosyl-L-methionine-dependent methyltransferase that catalyzes four methylations of the modified target histidine residue in translation elongation factor 2 (EF-2), to form an intermediate called diphthine methyl ester. The four successive methylation reactions represent the second step of diphthamide biosynthesis. This Candida albicans (strain SC5314 / ATCC MYA-2876) (Yeast) protein is Diphthine methyl ester synthase 1 (DPH5).